Consider the following 312-residue polypeptide: Ribosomal RNA small subunit methyltransferase H (312 aa).

Residues 34–36 (AGH), D54, F81, D102, and Q109 each bind S-adenosyl-L-methionine.

Belongs to the methyltransferase superfamily. RsmH family.

It localises to the cytoplasm. It carries out the reaction cytidine(1402) in 16S rRNA + S-adenosyl-L-methionine = N(4)-methylcytidine(1402) in 16S rRNA + S-adenosyl-L-homocysteine + H(+). Functionally, specifically methylates the N4 position of cytidine in position 1402 (C1402) of 16S rRNA. This chain is Ribosomal RNA small subunit methyltransferase H, found in Geotalea daltonii (strain DSM 22248 / JCM 15807 / FRC-32) (Geobacter daltonii).